The following is a 338-amino-acid chain: Holliday junction branch migration complex subunit RuvB (338 aa).

A large ATPase domain (RuvB-L) region spans residues 4–187 (ADKDRLVSGD…FGISEHMAYY (184 aa)). ATP contacts are provided by residues L26, R27, G68, K71, T72, T73, 134 to 136 (EDF), R177, Y187, and R224. A Mg(2+)-binding site is contributed by T72. A small ATPAse domain (RuvB-S) region spans residues 188–258 (SADDLSEIVK…MVDHALDQLQ (71 aa)). A head domain (RuvB-H) region spans residues 261 to 338 (QQGLDQIDRK…AHMGMSAEQH (78 aa)). Positions 316 and 321 each coordinate DNA.

The protein belongs to the RuvB family. Homohexamer. Forms an RuvA(8)-RuvB(12)-Holliday junction (HJ) complex. HJ DNA is sandwiched between 2 RuvA tetramers; dsDNA enters through RuvA and exits via RuvB. An RuvB hexamer assembles on each DNA strand where it exits the tetramer. Each RuvB hexamer is contacted by two RuvA subunits (via domain III) on 2 adjacent RuvB subunits; this complex drives branch migration. In the full resolvosome a probable DNA-RuvA(4)-RuvB(12)-RuvC(2) complex forms which resolves the HJ.

Its subcellular location is the cytoplasm. The enzyme catalyses ATP + H2O = ADP + phosphate + H(+). Functionally, the RuvA-RuvB-RuvC complex processes Holliday junction (HJ) DNA during genetic recombination and DNA repair, while the RuvA-RuvB complex plays an important role in the rescue of blocked DNA replication forks via replication fork reversal (RFR). RuvA specifically binds to HJ cruciform DNA, conferring on it an open structure. The RuvB hexamer acts as an ATP-dependent pump, pulling dsDNA into and through the RuvAB complex. RuvB forms 2 homohexamers on either side of HJ DNA bound by 1 or 2 RuvA tetramers; 4 subunits per hexamer contact DNA at a time. Coordinated motions by a converter formed by DNA-disengaged RuvB subunits stimulates ATP hydrolysis and nucleotide exchange. Immobilization of the converter enables RuvB to convert the ATP-contained energy into a lever motion, pulling 2 nucleotides of DNA out of the RuvA tetramer per ATP hydrolyzed, thus driving DNA branch migration. The RuvB motors rotate together with the DNA substrate, which together with the progressing nucleotide cycle form the mechanistic basis for DNA recombination by continuous HJ branch migration. Branch migration allows RuvC to scan DNA until it finds its consensus sequence, where it cleaves and resolves cruciform DNA. This chain is Holliday junction branch migration complex subunit RuvB, found in Lacticaseibacillus paracasei (strain ATCC 334 / BCRC 17002 / CCUG 31169 / CIP 107868 / KCTC 3260 / NRRL B-441) (Lactobacillus paracasei).